A 1132-amino-acid chain; its full sequence is Protein CROWDED NUCLEI 1 (1132 aa).

The interval 1 to 31 is disordered; the sequence is MSTPLKVWQRWSTPTKATNPDSNGSSHGTGL. Over residues 10-28 the composition is skewed to polar residues; the sequence is RWSTPTKATNPDSNGSSHG. Positions 73–714 form a coiled coil; that stretch reads LLIEKKEWSS…KKLKEQREQF (642 aa). Short sequence motifs (nuclear localization signal) lie at residues 379-386 and 693-700; these read EKREAEWK and IRKDVDDL. Residues serine 774 and serine 803 each carry the phosphoserine modification. Over residues 849-859 the composition is skewed to basic and acidic residues; the sequence is AESETGTKEVE. Disordered stretches follow at residues 849–871, 883–909, 924–1039, and 1061–1132; these read AESETGTKEVEVTNVNSDGDQSD, SLSNLDVDGQSRMKGKGKARTRRTRSV, INLY…VQQE, and GVST…FLTT. Polar residues predominate over residues 861 to 871; the sequence is TNVNSDGDQSD. Phosphoserine occurs at positions 865 and 883. A compositionally biased stretch (basic residues) spans 895-907; the sequence is MKGKGKARTRRTR. The residue at position 908 (serine 908) is a Phosphoserine. Residues serine 1093, serine 1105, and serine 1112 each carry the phosphoserine modification. Basic and acidic residues predominate over residues 1095-1105; it reads DVNKTPLRADS.

The protein belongs to the CRWN family. Core component of the LINC complex which is composed of inner nuclear membrane SUN domain-containing proteins coupled to outer nuclear membrane WIP and WIT proteins. The LINC complex also involves nucleoskeletal proteins CRWN/LINC and possibly KAKU4 and the cytoskeletal myosin KAKU1. Interacts with SUN1 and SUN2. Binds to KAKU4. In terms of tissue distribution, expressed at low levels in roots, leaves, flowers and flower stalks.

It localises to the nucleus membrane. Its subcellular location is the nucleus. The protein localises to the nucleoplasm. It is found in the nucleus lamina. Component of SUN-protein-containing multivariate complexes also called LINC complexes which link the nucleoskeleton and cytoskeleton by providing versatile outer nuclear membrane attachment sites for cytoskeletal filaments. Required for nucleus structure organization (e.g. size and shape). This is Protein CROWDED NUCLEI 1 from Arabidopsis thaliana (Mouse-ear cress).